Here is a 429-residue protein sequence, read N- to C-terminus: Phosphomethylpyrimidine synthase (429 aa).

Substrate is bound by residues Asn66, Met95, Tyr124, His163, 185–187, 226–229, and Glu265; these read SRG and DAMR. His269 is a Zn(2+) binding site. Tyr292 is a substrate binding site. Residue His333 participates in Zn(2+) binding. [4Fe-4S] cluster-binding residues include Cys409, Cys412, and Cys416.

This sequence belongs to the ThiC family. It depends on [4Fe-4S] cluster as a cofactor.

The catalysed reaction is 5-amino-1-(5-phospho-beta-D-ribosyl)imidazole + S-adenosyl-L-methionine = 4-amino-2-methyl-5-(phosphooxymethyl)pyrimidine + CO + 5'-deoxyadenosine + formate + L-methionine + 3 H(+). Its pathway is cofactor biosynthesis; thiamine diphosphate biosynthesis. Functionally, catalyzes the synthesis of the hydroxymethylpyrimidine phosphate (HMP-P) moiety of thiamine from aminoimidazole ribotide (AIR) in a radical S-adenosyl-L-methionine (SAM)-dependent reaction. This chain is Phosphomethylpyrimidine synthase, found in Methanopyrus kandleri (strain AV19 / DSM 6324 / JCM 9639 / NBRC 100938).